A 64-amino-acid polypeptide reads, in one-letter code: Translation machinery-associated protein 7B (64 aa).

A disordered region spans residues 1–38 (MSSHEGGKKKALKQPKKQAKEMDEEEKAFKQKQKEEQK). A compositionally biased stretch (basic and acidic residues) spans 27-38 (KAFKQKQKEEQK).

It belongs to the TMA7 family.

The chain is Translation machinery-associated protein 7B from Homo sapiens (Human).